The sequence spans 212 residues: GTP-binding nuclear protein Ran (212 aa).

Residues 3 to 167 (EKEQIKLVLV…VWLTSKLLGN (165 aa)) enclose the Small GTPase Ran-type domain. 14-21 (DGGVGKTT) is a GTP binding site. A switch-I region spans residues 33–41 (PRYIPTLGV). GTP contacts are provided by residues G64, 118 to 121 (NKVD), and 146 to 148 (SAK). The switch-II stretch occupies residues 64–80 (GQEKFGGLRDGYYIQGN).

The protein belongs to the small GTPase superfamily. Ran family. As to quaternary structure, found in a nuclear export complex with RanGTP, exportin and pre-miRNA.

It is found in the nucleus. Its function is as follows. GTP-binding protein involved in nucleocytoplasmic transport. Required for the import of protein into the nucleus and also for RNA export. Involved in chromatin condensation and control of cell cycle. The chain is GTP-binding nuclear protein Ran (ranA) from Dictyostelium discoideum (Social amoeba).